Here is a 484-residue protein sequence, read N- to C-terminus: tRNA sulfurtransferase (484 aa).

The THUMP domain occupies 63–167; the sequence is QAFGERLACI…GDKLYMVTKR (105 aa). ATP contacts are provided by residues 185–186, lysine 267, glycine 289, and glutamine 298; that span reads LI. An intrachain disulfide couples cysteine 346 to cysteine 458. In terms of domain architecture, Rhodanese spans 406–484; it reads IDTNEVVIDI…GYHNVKVYRP (79 aa). Catalysis depends on cysteine 458, which acts as the Cysteine persulfide intermediate.

This sequence belongs to the ThiI family.

Its subcellular location is the cytoplasm. It catalyses the reaction [ThiI sulfur-carrier protein]-S-sulfanyl-L-cysteine + a uridine in tRNA + 2 reduced [2Fe-2S]-[ferredoxin] + ATP + H(+) = [ThiI sulfur-carrier protein]-L-cysteine + a 4-thiouridine in tRNA + 2 oxidized [2Fe-2S]-[ferredoxin] + AMP + diphosphate. The enzyme catalyses [ThiS sulfur-carrier protein]-C-terminal Gly-Gly-AMP + S-sulfanyl-L-cysteinyl-[cysteine desulfurase] + AH2 = [ThiS sulfur-carrier protein]-C-terminal-Gly-aminoethanethioate + L-cysteinyl-[cysteine desulfurase] + A + AMP + 2 H(+). It participates in cofactor biosynthesis; thiamine diphosphate biosynthesis. In terms of biological role, catalyzes the ATP-dependent transfer of a sulfur to tRNA to produce 4-thiouridine in position 8 of tRNAs, which functions as a near-UV photosensor. Also catalyzes the transfer of sulfur to the sulfur carrier protein ThiS, forming ThiS-thiocarboxylate. This is a step in the synthesis of thiazole, in the thiamine biosynthesis pathway. The sulfur is donated as persulfide by IscS. This is tRNA sulfurtransferase from Shewanella sp. (strain MR-4).